The following is a 215-amino-acid chain: Sodium channel regulatory subunit beta-2 (215 aa).

Residues 1 to 29 (MHRDAWLPRPAFSLTGLSLFFSLVPPGRS) form the signal peptide. At 30–157 (MEVTVPATLN…MEEPPERDST (128 aa)) the chain is on the extracellular side. The Ig-like C2-type domain maps to 32 to 154 (VTVPATLNVL…QVLMEEPPER (123 aa)). N-linked (GlcNAc...) asparagine glycans are attached at residues Asn-42, Asn-66, and Asn-74. 2 disulfides stabilise this stretch: Cys-50–Cys-127 and Cys-72–Cys-75. A helical transmembrane segment spans residues 158 to 179 (VAVIVGASVGGFLAVVILVLMV). Residues 180–215 (VKCVRRKKEQKLSTDDLKTEEEGKTDGEGNPDDGAK) are Cytoplasmic-facing. The interval 187 to 215 (KEQKLSTDDLKTEEEGKTDGEGNPDDGAK) is disordered. Residues 189 to 215 (QKLSTDDLKTEEEGKTDGEGNPDDGAK) are compositionally biased toward basic and acidic residues. Ser-192 carries the post-translational modification Phosphoserine. Thr-204 is subject to Phosphothreonine.

Belongs to the sodium channel auxiliary subunit SCN2B (TC 8.A.17) family. In terms of assembly, a voltage-gated sodium (Nav) channel consists of an ion-conducting pore-forming alpha subunit functional on its own that is regulated by one or more beta subunits. The beta subunit SCN2B is disulfide-linked to the pore-forming alpha subunit. Interacts with SCN1A; regulatory subunit of SCN1A/Nav1.1. Interacts with SCN2A; regulatory subunit of SCN2A/Nav1.2. Interacts with SCN3A; regulatory subunit of SCN3A/Nav1.3. Interacts with SCN5A; regulatory subunit of SCN5A/Nav1.5. Interacts with SCN8A; regulatory subunit of SCN8A/Nav1.6. Interacts with SCN9A; regulatory subunit of SCN9A/Nav1.7. Interacts with SCN10A; regulatory subunit of SCN10A/Nav1.8. Interacts with TNR; may play a crucial role in clustering and regulation of activity of SCN2B-containing Nav channels at nodes of Ranvier.

The protein resides in the cell membrane. It is found in the cell projection. It localises to the axon. In terms of biological role, regulatory subunit of multiple voltage-gated sodium (Nav) channels directly mediating the depolarization of excitable membranes. Navs, also called VGSCs (voltage-gated sodium channels) or VDSCs (voltage-dependent sodium channels), operate by switching between closed and open conformations depending on the voltage difference across the membrane. In the open conformation they allow Na(+) ions to selectively pass through the pore, along their electrochemical gradient. The influx of Na+ ions provokes membrane depolarization, initiating the propagation of electrical signals throughout cells and tissues. The accessory beta subunits participate in localization and functional modulation of the Nav channels. Modulates the activity of SCN1A/Nav1.1, SCN2A/Nav1.2, SCN2A/Nav1.3, SCN5A/Nav1.5, SCN8A/Nav1.6, SCN9A/Nav1.7 and SCN10A/Nav1.8. In Homo sapiens (Human), this protein is Sodium channel regulatory subunit beta-2.